We begin with the raw amino-acid sequence, 59 residues long: Large ribosomal subunit protein uL30 (59 aa).

Belongs to the universal ribosomal protein uL30 family. As to quaternary structure, part of the 50S ribosomal subunit.

The sequence is that of Large ribosomal subunit protein uL30 from Solibacter usitatus (strain Ellin6076).